Here is a 296-residue protein sequence, read N- to C-terminus: GTPase Era (296 aa).

The Era-type G domain occupies 3 to 170; that stretch reads KSGFVTIVGR…KELMFKYIPE (168 aa). Residues 11 to 18 are G1; the sequence is GRPNVGKS. Residue 11 to 18 participates in GTP binding; it reads GRPNVGKS. A G2 region spans residues 37–41; the sequence is QTTRN. The segment at 58-61 is G3; that stretch reads DTPG. GTP contacts are provided by residues 58–62 and 120–123; these read DTPGI and NKID. Residues 120-123 form a G4 region; that stretch reads NKID. Positions 149 to 151 are G5; that stretch reads ISA. Residues 201–278 form the KH type-2 domain; sequence LSEEVPHGIA…YIRLWVKVKE (78 aa).

This sequence belongs to the TRAFAC class TrmE-Era-EngA-EngB-Septin-like GTPase superfamily. Era GTPase family. Monomer.

The protein resides in the cytoplasm. It is found in the cell membrane. Functionally, an essential GTPase that binds both GDP and GTP, with rapid nucleotide exchange. Plays a role in 16S rRNA processing and 30S ribosomal subunit biogenesis and possibly also in cell cycle regulation and energy metabolism. This is GTPase Era from Clostridium botulinum (strain Kyoto / Type A2).